Here is a 462-residue protein sequence, read N- to C-terminus: Adenosylhomocysteinase (462 aa).

The substrate site is built by threonine 55, aspartate 128, and glutamate 188. 189 to 191 is an NAD(+) binding site; that stretch reads TTT. Residues lysine 218 and aspartate 222 each coordinate substrate. NAD(+) is bound by residues asparagine 223, 252–257, glutamate 275, asparagine 310, 331–333, and asparagine 376; these read GYGDVG and IGH.

This sequence belongs to the adenosylhomocysteinase family. It depends on NAD(+) as a cofactor.

It is found in the cytoplasm. The catalysed reaction is S-adenosyl-L-homocysteine + H2O = L-homocysteine + adenosine. It functions in the pathway amino-acid biosynthesis; L-homocysteine biosynthesis; L-homocysteine from S-adenosyl-L-homocysteine: step 1/1. Functionally, may play a key role in the regulation of the intracellular concentration of adenosylhomocysteine. The chain is Adenosylhomocysteinase from Roseobacter denitrificans (strain ATCC 33942 / OCh 114) (Erythrobacter sp. (strain OCh 114)).